The primary structure comprises 856 residues: MRVKGIRRNYQHWWGWGTMLLGLLMICSATEKLWVTVYYGVPVWKEATTTLFCASDAKAYDTEVHNVWATQACVPTDPNPQEVELVNVTENFNMWKNNMVEQMHEDIISLWDQSLKPCVKLTPLCVTLNCTDLRNTTNTNNSTANNNSNSEGTIKGGEMKNCSFNITTSIRDKMQKEYALLYKLDIVSIDNDSTSYRLISCNTSVITQACPKISFEPIPIHYCAPAGFAILKCNDKKFSGKGSCKNVSTVQCTHGIRPVVSTQLLLNGSLAEEEVVIRSENFTDNAKTIIVHLNESVQINCTRPNYNKRKRIHIGPGRAFYTTKNIIGTIRQAHCNISRAKWNDTLRQIVSKLKEQFKNKTIVFNQSSGGDPEIVMHSFNCGGEFFYCNTSPLFNSTWNGNNTWNNTTGSNNNITLQCKIKQIINMWQEVGKAMYAPPIEGQIRCSSNITGLLLTRDGGKDTDTNDTEIFRPGGGDMRDNWRSELYKYKVVTIEPLGVAPTKAKRRVVQREKRAAIGALFLGFLGAAGSTMGAASVTLTVQARLLLSGIVQQQNNLLRAIEAQQHMLQLTVWGIKQLQARVLAVERYLKDQQLLGFWGCSGKLICTTTVPWNASWSNKSLDDIWNNMTWMQWEREIDNYTSLIYSLLEKSQTQQEKNEQELLELDKWASLWNWFDITNWLWYIKIFIMIVGGLVGLRIVFAVLSIVNRVRQGYSPLSLQTRPPVPRGPDRPEGIEEEGGERDRDTSGRLVHGFLAIIWVDLRSLFLFSYHHRDLLLIAARIVELLGRRGWEVLKYWWNLLQYWSQELKSSAVSLLNATAIAVAEGTDRVIEVLQRAGRAILHIPTRIRQGLERALL.

The first 31 residues, 1–31, serve as a signal peptide directing secretion; sequence MRVKGIRRNYQHWWGWGTMLLGLLMICSATE. The Extracellular segment spans residues 32–685; sequence KLWVTVYYGV…ITNWLWYIKI (654 aa). A disulfide bridge connects residues Cys-53 and Cys-73. Asn-87, Asn-129, Asn-135, Asn-140, Asn-141, Asn-146, Asn-161, Asn-165, Asn-191, and Asn-202 each carry an N-linked (GlcNAc...) asparagine; by host glycan. Intrachain disulfides connect Cys-118/Cys-210, Cys-125/Cys-201, Cys-130/Cys-162, Cys-223/Cys-252, and Cys-233/Cys-244. A V1 region spans residues 130–161; it reads CTDLRNTTNTNNSTANNNSNSEGTIKGGEMKN. The segment at 162 to 201 is V2; sequence CSFNITTSIRDKMQKEYALLYKLDIVSIDNDSTSYRLISC. N-linked (GlcNAc...) asparagine; by host glycosylation is found at Asn-246, Asn-267, Asn-281, Asn-294, and Asn-300. Residues 301–334 are V3; sequence CTRPNYNKRKRIHIGPGRAFYTTKNIIGTIRQAH. A disulfide bridge links Cys-301 with Cys-335. N-linked (GlcNAc...) asparagine; by host glycosylation is found at Asn-336, Asn-343, Asn-359, and Asn-365. A CD4-binding loop region spans residues 367 to 377; sequence SSGGDPEIVMH. 2 disulfides stabilise this stretch: Cys-381–Cys-445 and Cys-388–Cys-418. The tract at residues 388 to 418 is V4; it reads CNTSPLFNSTWNGNNTWNNTTGSNNNITLQC. 5 N-linked (GlcNAc...) asparagine; by host glycosylation sites follow: Asn-395, Asn-401, Asn-405, Asn-406, and Asn-413. The essential for CD4-binding; epitope recognized by the antibody YZ23 stretch occupies residues 421 to 433; sequence KQIINMWQEVGKA. Asn-448 and Asn-465 each carry an N-linked (GlcNAc...) asparagine; by host glycan. 2 V5 regions span residues 461–473 and 463–473; these read DTDT…FRPG and DTNDTEIFRPG. The tract at residues 514 to 533 is fusion peptide; it reads AAIGALFLGFLGAAGSTMGA. The immunosuppression stretch occupies residues 575–593; sequence KQLQARVLAVERYLKDQQL. Cysteines 599 and 605 form a disulfide. N-linked (GlcNAc...) asparagine; by host glycans are attached at residues Asn-612, Asn-617, Asn-626, and Asn-638. A coiled-coil region spans residues 634–668; sequence REIDNYTSLIYSLLEKSQTQQEKNEQELLELDKWA. The MPER; binding to GalCer stretch occupies residues 663-684; it reads ELDKWASLWNWFDITNWLWYIK. A helical transmembrane segment spans residues 686-706; that stretch reads FIMIVGGLVGLRIVFAVLSIV. At 707–856 the chain is on the cytoplasmic side; sequence NRVRQGYSPL…IRQGLERALL (150 aa). The YXXL motif; contains endocytosis signal signature appears at 713–716; sequence YSPL. Positions 717-744 are disordered; it reads SLQTRPPVPRGPDRPEGIEEEGGERDRD. Positions 855–856 match the Di-leucine internalization motif motif; that stretch reads LL.

The protein belongs to the HIV-1 env protein family. In terms of assembly, the mature envelope protein (Env) consists of a homotrimer of non-covalently associated gp120-gp41 heterodimers. The resulting complex protrudes from the virus surface as a spike. There seems to be as few as 10 spikes on the average virion. Interacts with host CD4, CCR5 and CXCR4. Gp120 also interacts with the C-type lectins CD209/DC-SIGN and CLEC4M/DC-SIGNR (collectively referred to as DC-SIGN(R)). Gp120 and gp41 interact with GalCer. Gp120 interacts with host ITGA4/ITGB7 complex; on CD4+ T-cells, this interaction results in rapid activation of integrin ITGAL/LFA-1, which facilitates efficient cell-to-cell spreading of HIV-1. Gp120 interacts with cell-associated heparan sulfate; this interaction increases virus infectivity on permissive cells and may be involved in infection of CD4- cells. The mature envelope protein (Env) consists of a homotrimer of non-covalently associated gp120-gp41 heterodimers. The resulting complex protrudes from the virus surface as a spike. There seems to be as few as 10 spikes on the average virion. In terms of processing, highly glycosylated by host. The high number of glycan on the protein is reffered to as 'glycan shield' because it contributes to hide protein sequence from adaptive immune system. Palmitoylation of the transmembrane protein and of Env polyprotein (prior to its proteolytic cleavage) is essential for their association with host cell membrane lipid rafts. Palmitoylation is therefore required for envelope trafficking to classical lipid rafts, but not for viral replication. Post-translationally, specific enzymatic cleavages in vivo yield mature proteins. Envelope glycoproteins are synthesized as an inactive precursor that is heavily N-glycosylated and processed likely by host cell furin in the Golgi to yield the mature SU and TM proteins. The cleavage site between SU and TM requires the minimal sequence [KR]-X-[KR]-R. About 2 of the 9 disulfide bonds of gp41 are reduced by P4HB/PDI, following binding to CD4 receptor.

The protein resides in the virion membrane. Its subcellular location is the host cell membrane. The protein localises to the host endosome membrane. In terms of biological role, oligomerizes in the host endoplasmic reticulum into predominantly trimers. In a second time, gp160 transits in the host Golgi, where glycosylation is completed. The precursor is then proteolytically cleaved in the trans-Golgi and thereby activated by cellular furin or furin-like proteases to produce gp120 and gp41. Attaches the virus to the host lymphoid cell by binding to the primary receptor CD4. This interaction induces a structural rearrangement creating a high affinity binding site for a chemokine coreceptor like CXCR4 and/or CCR5. Acts as a ligand for CD209/DC-SIGN and CLEC4M/DC-SIGNR, which are respectively found on dendritic cells (DCs), and on endothelial cells of liver sinusoids and lymph node sinuses. These interactions allow capture of viral particles at mucosal surfaces by these cells and subsequent transmission to permissive cells. HIV subverts the migration properties of dendritic cells to gain access to CD4+ T-cells in lymph nodes. Virus transmission to permissive T-cells occurs either in trans (without DCs infection, through viral capture and transmission), or in cis (following DCs productive infection, through the usual CD4-gp120 interaction), thereby inducing a robust infection. In trans infection, bound virions remain infectious over days and it is proposed that they are not degraded, but protected in non-lysosomal acidic organelles within the DCs close to the cell membrane thus contributing to the viral infectious potential during DCs' migration from the periphery to the lymphoid tissues. On arrival at lymphoid tissues, intact virions recycle back to DCs' cell surface allowing virus transmission to CD4+ T-cells. Its function is as follows. Acts as a class I viral fusion protein. Under the current model, the protein has at least 3 conformational states: pre-fusion native state, pre-hairpin intermediate state, and post-fusion hairpin state. During fusion of viral and target intracellular membranes, the coiled coil regions (heptad repeats) assume a trimer-of-hairpins structure, positioning the fusion peptide in close proximity to the C-terminal region of the ectodomain. The formation of this structure appears to drive apposition and subsequent fusion of viral and target cell membranes. Complete fusion occurs in host cell endosomes and is dynamin-dependent, however some lipid transfer might occur at the plasma membrane. The virus undergoes clathrin-dependent internalization long before endosomal fusion, thus minimizing the surface exposure of conserved viral epitopes during fusion and reducing the efficacy of inhibitors targeting these epitopes. Membranes fusion leads to delivery of the nucleocapsid into the cytoplasm. The sequence is that of Envelope glycoprotein gp160 from Homo sapiens (Human).